A 389-amino-acid polypeptide reads, in one-letter code: Lipid-A-disaccharide synthase (389 aa).

Belongs to the LpxB family.

The enzyme catalyses a lipid X + a UDP-2-N,3-O-bis[(3R)-3-hydroxyacyl]-alpha-D-glucosamine = a lipid A disaccharide + UDP + H(+). It functions in the pathway bacterial outer membrane biogenesis; LPS lipid A biosynthesis. Condensation of UDP-2,3-diacylglucosamine and 2,3-diacylglucosamine-1-phosphate to form lipid A disaccharide, a precursor of lipid A, a phosphorylated glycolipid that anchors the lipopolysaccharide to the outer membrane of the cell. The chain is Lipid-A-disaccharide synthase from Burkholderia lata (strain ATCC 17760 / DSM 23089 / LMG 22485 / NCIMB 9086 / R18194 / 383).